A 337-amino-acid chain; its full sequence is Secreted effector protein EspF(U) (337 aa).

Repeat copies occupy residues 96–142, 143–189, 190–236, 237–283, and 284–330. The tract at residues 96–330 is 5 X 48 AA approximate tandem repeats; that stretch reads IKPARSMAEH…RLMQHLAEHG (235 aa). A disordered region spans residues 291-312; it reads AEHIPPAPNWPAPTPPVQNEQS. Pro residues predominate over residues 295–306; sequence PPAPNWPAPTPP.

Belongs to the EspF(U)/TccP family. In terms of assembly, interacts with host BAIAP2 and host WASL/N-WASP. Can also interact with host proteins BAIAP2L1 and WAS/WASP.

It localises to the secreted. The protein localises to the host cytoplasm. Required for efficient pedestal formation in host epithelial cells during infection. Acts as an intermediate between Tir (via host BAIAP2) and host WASL/N-WASP. Directly binds and activates WASL/N-WASP, which stimulates actin polymerization and leads to the formation of actin pedestals at the sites of bacterial adhesion. The polypeptide is Secreted effector protein EspF(U) (espF(U)) (Escherichia coli O157:H7).